The following is a 413-amino-acid chain: Serine hydroxymethyltransferase (413 aa).

(6S)-5,6,7,8-tetrahydrofolate is bound by residues Leu119 and 123–125 (GHL). Position 228 is an N6-(pyridoxal phosphate)lysine (Lys228).

Belongs to the SHMT family. In terms of assembly, homodimer. Pyridoxal 5'-phosphate is required as a cofactor.

The protein resides in the cytoplasm. The catalysed reaction is (6R)-5,10-methylene-5,6,7,8-tetrahydrofolate + glycine + H2O = (6S)-5,6,7,8-tetrahydrofolate + L-serine. It participates in one-carbon metabolism; tetrahydrofolate interconversion. The protein operates within amino-acid biosynthesis; glycine biosynthesis; glycine from L-serine: step 1/1. Functionally, catalyzes the reversible interconversion of serine and glycine with tetrahydrofolate (THF) serving as the one-carbon carrier. This reaction serves as the major source of one-carbon groups required for the biosynthesis of purines, thymidylate, methionine, and other important biomolecules. Also exhibits THF-independent aldolase activity toward beta-hydroxyamino acids, producing glycine and aldehydes, via a retro-aldol mechanism. This Caldanaerobacter subterraneus subsp. tengcongensis (strain DSM 15242 / JCM 11007 / NBRC 100824 / MB4) (Thermoanaerobacter tengcongensis) protein is Serine hydroxymethyltransferase.